A 454-amino-acid chain; its full sequence is tRNA modification GTPase MnmE (454 aa).

Residues Arg23, Glu80, and Lys120 each contribute to the (6S)-5-formyl-5,6,7,8-tetrahydrofolate site. A TrmE-type G domain is found at 216–377 (GMKVVIAGRP…LRNNLKQSMG (162 aa)). Asn226 contacts K(+). GTP-binding positions include 226–231 (NAGKSS), 245–251 (TDIAGTT), 270–273 (DTAG), 335–338 (NKAD), and 358–360 (SAR). Ser230 lines the Mg(2+) pocket. K(+)-binding residues include Thr245, Ile247, and Thr250. Thr251 serves as a coordination point for Mg(2+). Lys454 serves as a coordination point for (6S)-5-formyl-5,6,7,8-tetrahydrofolate.

This sequence belongs to the TRAFAC class TrmE-Era-EngA-EngB-Septin-like GTPase superfamily. TrmE GTPase family. As to quaternary structure, homodimer. Heterotetramer of two MnmE and two MnmG subunits. K(+) is required as a cofactor.

The protein localises to the cytoplasm. Its function is as follows. Exhibits a very high intrinsic GTPase hydrolysis rate. Involved in the addition of a carboxymethylaminomethyl (cmnm) group at the wobble position (U34) of certain tRNAs, forming tRNA-cmnm(5)s(2)U34. The protein is tRNA modification GTPase MnmE of Salmonella paratyphi A (strain AKU_12601).